Reading from the N-terminus, the 701-residue chain is Peptide transporter CstA (701 aa).

The Cytoplasmic segment spans residues 1–6 (MNKSGK). The helical transmembrane segment at 7–27 (YLVWTVLSVMGAFALGYIALN) threads the bilayer. Over 28–33 (RGEQIN) the chain is Periplasmic. Residues 34 to 54 (ALWIVVASVCIYLIAYRFYGL) form a helical membrane-spanning segment. Over 55-86 (YIAKNVLAVDPTRMTPAVRHNDGLDYVPTDKK) the chain is Cytoplasmic. Residues 87–107 (VLFGHHFAAIAGAGPLVGPVL) traverse the membrane as a helical segment. Residues 108 to 117 (AAQMGYLPGM) are Periplasmic-facing. A helical transmembrane segment spans residues 118 to 138 (IWLLAGVVLAGAVQDFMVLFV). At 139 to 160 (STRRDGRSLGELVKEEMGPTAG) the chain is on the cytoplasmic side. The helical transmembrane segment at 161-181 (VIALVACFMIMVIILAVLAMI) threads the bilayer. The Periplasmic segment spans residues 182-189 (VVKALTHS). The chain crosses the membrane as a helical span at residues 190-210 (PWGTYTVAFTIPLALFMGIYL). The Cytoplasmic segment spans residues 211-217 (RYLRPGR). Residues 218–238 (IGEVSVIGLVFLIFAIISGGW) form a helical membrane-spanning segment. Residues 239 to 255 (VAESPTWAPYFDFTGVQ) lie on the Periplasmic side of the membrane. Residues 256–276 (LTWMLVGYGFVAAVLPVWLLL) traverse the membrane as a helical segment. Residues 277 to 280 (APRD) lie on the Cytoplasmic side of the membrane. Residues 281 to 301 (YLSTFLKIGTIVGLAVGILIM) traverse the membrane as a helical segment. Residues 302 to 324 (RPTLTMPALTKFVDGTGPVWTGN) lie on the Periplasmic side of the membrane. The chain crosses the membrane as a helical span at residues 325–345 (LFPFLFITIACGAVSGFHALI). Residues 346 to 372 (SSGTTPKMLANEGQACFIGYGGMLMES) are Cytoplasmic-facing. Residues 373–393 (FVAIMALVSACIIDPGVYFAM) form a helical membrane-spanning segment. The Periplasmic segment spans residues 394–395 (NS). A helical membrane pass occupies residues 396–416 (PMAVLAPAGTADVVASAAQVV). The Cytoplasmic portion of the chain corresponds to 417 to 439 (SSWGFSITPDTLNQIASEVGEQS). Residues 440-460 (IISRAGGAPTLAVGMAYILHG) traverse the membrane as a helical segment. At 461–463 (ALG) the chain is on the periplasmic side. Residues 464–484 (GMMDVAFWYHFAILFEALFIL) traverse the membrane as a helical segment. Residues 485–523 (TAVDAGTRAARFMLQDLLGVVSPGLKRTDSLPANLLATA) are Cytoplasmic-facing. Residues 524–544 (LCVLAWGYFLHQGVVDPLGGI) form a helical membrane-spanning segment. Over 545–550 (NTLWPL) the chain is Periplasmic. The chain crosses the membrane as a helical span at residues 551–571 (FGIANQMLAGMALMLCAVVLF). Topologically, residues 572–577 (KMKRQR) are cytoplasmic. The chain crosses the membrane as a helical span at residues 578–598 (YAWVALVPTAWLLICTLTAGW). At 599 to 643 (QKAFSPDAKVGFLAIANKFQAMIDSGNIPSQYTESQLAQLVFNNR) the chain is on the periplasmic side. A helical transmembrane segment spans residues 644–664 (LDAGLTIFFMVVVVVLALFSI). Over 665–701 (KTALAALKDPKPTAKETPYEPMPENVEEIVAQAKGAH) the chain is Cytoplasmic.

The protein belongs to the peptide transporter carbon starvation (CstA) (TC 2.A.114) family.

It localises to the cell inner membrane. Involved in peptide utilization during carbon starvation. This is Peptide transporter CstA from Escherichia coli (strain K12).